The following is a 225-amino-acid chain: Single-pass membrane and coiled-coil domain-containing protein 3 (225 aa).

A coiled-coil region spans residues 62–92; the sequence is IKENCDLIIQAIMKIQKELQKVDEALKDKLE. Residues 155 to 175 traverse the membrane as a helical segment; sequence IGASLLGSIGVAVLGLGIDMI. Positions 183–207 form a coiled coil; sequence VEKTQLQAAIKSYEKHLVEFKSASE.

Its subcellular location is the membrane. The sequence is that of Single-pass membrane and coiled-coil domain-containing protein 3 (SMCO3) from Homo sapiens (Human).